The following is a 355-amino-acid chain: 3-isopropylmalate dehydrogenase (355 aa).

Residues arginine 90, arginine 100, arginine 128, and aspartate 222 each coordinate substrate. 3 residues coordinate Mg(2+): aspartate 222, aspartate 246, and aspartate 250. Residue 280–292 (GSAPDIAGKGVAN) participates in NAD(+) binding.

This sequence belongs to the isocitrate and isopropylmalate dehydrogenases family. LeuB type 1 subfamily. Homodimer. Mg(2+) is required as a cofactor. The cofactor is Mn(2+).

It is found in the cytoplasm. It catalyses the reaction (2R,3S)-3-isopropylmalate + NAD(+) = 4-methyl-2-oxopentanoate + CO2 + NADH. It participates in amino-acid biosynthesis; L-leucine biosynthesis; L-leucine from 3-methyl-2-oxobutanoate: step 3/4. Functionally, catalyzes the oxidation of 3-carboxy-2-hydroxy-4-methylpentanoate (3-isopropylmalate) to 3-carboxy-4-methyl-2-oxopentanoate. The product decarboxylates to 4-methyl-2 oxopentanoate. The protein is 3-isopropylmalate dehydrogenase of Cupriavidus metallidurans (strain ATCC 43123 / DSM 2839 / NBRC 102507 / CH34) (Ralstonia metallidurans).